A 392-amino-acid chain; its full sequence is Succinate--CoA ligase [ADP-forming] subunit beta (392 aa).

The ATP-grasp domain occupies 9 to 236; that stretch reads RDLFERHGLP…QAAVDPLEQA (228 aa). Residues Lys-45, 52-54, Ala-94, and Glu-99 each bind ATP; that span reads GRG. Positions 191 and 205 each coordinate Mg(2+). Residues Asn-256 and 318–320 contribute to the substrate site; that span reads GIT.

Belongs to the succinate/malate CoA ligase beta subunit family. Heterotetramer of two alpha and two beta subunits. Requires Mg(2+) as cofactor.

It carries out the reaction succinate + ATP + CoA = succinyl-CoA + ADP + phosphate. The enzyme catalyses GTP + succinate + CoA = succinyl-CoA + GDP + phosphate. It functions in the pathway carbohydrate metabolism; tricarboxylic acid cycle; succinate from succinyl-CoA (ligase route): step 1/1. Its function is as follows. Succinyl-CoA synthetase functions in the citric acid cycle (TCA), coupling the hydrolysis of succinyl-CoA to the synthesis of either ATP or GTP and thus represents the only step of substrate-level phosphorylation in the TCA. The beta subunit provides nucleotide specificity of the enzyme and binds the substrate succinate, while the binding sites for coenzyme A and phosphate are found in the alpha subunit. The chain is Succinate--CoA ligase [ADP-forming] subunit beta from Salinispora arenicola (strain CNS-205).